The primary structure comprises 275 residues: Probable dual specificity protein phosphatase DDB_G0271350 (275 aa).

In terms of domain architecture, Tyrosine-protein phosphatase spans 2–143 (GISMILDNFL…LCDLELKLTN (142 aa)). Cysteine 87 serves as the catalytic Phosphocysteine intermediate.

It belongs to the protein-tyrosine phosphatase family. Non-receptor class dual specificity subfamily.

It carries out the reaction O-phospho-L-tyrosyl-[protein] + H2O = L-tyrosyl-[protein] + phosphate. The enzyme catalyses O-phospho-L-seryl-[protein] + H2O = L-seryl-[protein] + phosphate. The catalysed reaction is O-phospho-L-threonyl-[protein] + H2O = L-threonyl-[protein] + phosphate. Has a dual specificity toward Ser/Thr and Tyr-containing proteins. This Dictyostelium discoideum (Social amoeba) protein is Probable dual specificity protein phosphatase DDB_G0271350.